The following is an 850-amino-acid chain: Tripartite terminase subunit 1 (850 aa).

Residues 191-219 form a C3H1-type zinc finger; it reads CAQCYEELTIIPNQGRSLNKRLQGLLCNH. Residues 438–489 form a disordered region; that stretch reads GTTLMTASNSSNSSTHSQRNNGGGGRARGGGKKVVGGGVNGQDGDGSENGLR. The segment covering 439-457 has biased composition (low complexity); it reads TTLMTASNSSNSSTHSQRN. The span at 458–481 shows a compositional bias: gly residues; the sequence is NGGGGRARGGGKKVVGGGVNGQDG. 709 to 716 contributes to the ATP binding site; it reads YNETFGKQ. The disordered stretch occupies residues 801-831; that stretch reads WLPSPYPSSSTAGVSRRVRATRKRPRRASSL. The span at 816–827 shows a compositional bias: basic residues; sequence RRVRATRKRPRR. A Nuclear localization signal motif is present at residues 822-827; that stretch reads RKRPRR.

Belongs to the herpesviridae TRM1 protein family. In terms of assembly, associates with TRM2 and TRM3 to form the tripartite terminase complex. Interacts with portal protein.

The protein resides in the host nucleus. Component of the molecular motor that translocates viral genomic DNA in empty capsid during DNA packaging. Forms a tripartite terminase complex together with TRM2 and TRM3 in the host cytoplasm. Once the complex reaches the host nucleus, it interacts with the capsid portal vertex. This portal forms a ring in which genomic DNA is translocated into the capsid. TRM1 carries an endonuclease activity that plays an important role for the cleavage of concatemeric viral DNA into unit length genomes. The protein is Tripartite terminase subunit 1 of Homo sapiens (Human).